A 1161-amino-acid polypeptide reads, in one-letter code: MTISDKIRVYELSRDLKLENKDILDAAQKLSISVKSHSSSMSLEDAKKIKNLIRNGNSGKKIISVSKSSFKAANEQQNNIDNQNKDSNSRSKPLNKEKPSKESLNKKPLLNKPVNKEENSLISSNKKNTAKLKNPNPPSRISNLQSQVLPNSHNKTQHTIKTKNPNEKKNSTKIVQEKKSLNNNSPLRTKSPARPPIQLIEKPKNLTTSNKDIKANKKNDNSLNQRPQQANRLNNNNNFPKKNINNPRIKNTPELVGAPIRREDPKINSNRQNSNSRQPPSNIQASPNRPVIPNRQVTPNRPSNPNRQGVSNRPGGGQNRQGVPNRPGSPYRPGNPNRQGMSNRPGVGGQNRQGAPNRQGSPYRQGDPNRQGGNYRQGDLNRSGSKFNNQNPSGIRKPVAPNELMQLQKTNASDKEKLNRSNFEKQKVEPPKQKAKAPNSRLNASPTAKKTPHRSFTNNSKKPGRSDWDDSAKLEALRNKNPQKQRQKVHIIGENDDSLTSETSGYSGEKVSILSASLARPKKEKSEEPKSQKTTRQFKKKNKETTRQRQKRRAMELRAAKDAKQVRPEMIIVPEDNLTVQELADKLSLESSEIIKSLFFKGITATVTQSLDLATIETVAEEFGVPVLQDDVEEAAKKTVDMIETDDIESLIKRPPVITVMGHVDHGKTSLLDSIRESRVASGEAGGITQHIGAYQVEFEHESKKKKLTFLDTPGHEAFTAMRARGTKVTDVAVLVVAADDGCRPQTLEAISHARAAKVPIVVAINKIDKEGASPDRVKQELSEKDLIAEDWGGDVVMVPVSAIKKQNIDKLLEMILLVSEVEDLQANPERLAKGTVIEAHLDKAKGPVATLLVQNGTLKAGDVLAAGSVLGKIRAMVDEHGNRIKEAGPSCPVEALGFSEVPTAGDEFEVYPDEKTARGIVGERATDARATKLAQQMASRRVSLSSLSTQANDGELKELNLILKADVQGSVEAILGSLEQLPKNEVQVRVLLSAPGEITETDIDLAAASGSVIIGFNTSLASGAKRAADSNNVDIREYEVIYKLLEDIQSAMEGLLEPDLVEESLGQAEVRATFAVGKGAIAGCYIQSGKLQRNCSLRVLRSDKVIFEGNLDSLKRSKDDVKEVNTGFECGVGCDKFSTWNEGDIIEAFKFVTKKRTLNK.

Positions 67-561 (KSSFKAANEQ…RRAMELRAAK (495 aa)) are disordered. Positions 83 to 105 (QNKDSNSRSKPLNKEKPSKESLN) are enriched in basic and acidic residues. Positions 139–154 (SRISNLQSQVLPNSHN) are enriched in polar residues. Composition is skewed to basic and acidic residues over residues 164-180 (NPNE…EKKS) and 211-220 (KDIKANKKND). Composition is skewed to low complexity over residues 224-250 (NQRP…PRIK) and 268-282 (NSNR…PPSN). 3 stretches are compositionally biased toward polar residues: residues 295–311 (RQVT…QGVS), 352–362 (RQGAPNRQGSP), and 380–393 (LNRS…QNPS). Positions 412–432 (ASDKEKLNRSNFEKQKVEPPK) are enriched in basic and acidic residues. Over residues 440-461 (SRLNASPTAKKTPHRSFTNNSK) the composition is skewed to polar residues. 2 stretches are compositionally biased toward basic and acidic residues: residues 464–478 (GRSD…EALR) and 543–561 (KETT…RAAK). The tr-type G domain occupies 653-830 (KRPPVITVMG…EVEDLQANPE (178 aa)). Residues 662 to 669 (GHVDHGKT) form a G1 region. A GTP-binding site is contributed by 662–669 (GHVDHGKT). A G2 region spans residues 687–691 (GITQH). The tract at residues 712–715 (DTPG) is G3. GTP contacts are provided by residues 712–716 (DTPGH) and 766–769 (NKID). The G4 stretch occupies residues 766–769 (NKID). The segment at 802–804 (SAI) is G5.

This sequence belongs to the TRAFAC class translation factor GTPase superfamily. Classic translation factor GTPase family. IF-2 subfamily.

The protein localises to the cytoplasm. Functionally, one of the essential components for the initiation of protein synthesis. Protects formylmethionyl-tRNA from spontaneous hydrolysis and promotes its binding to the 30S ribosomal subunits. Also involved in the hydrolysis of GTP during the formation of the 70S ribosomal complex. The sequence is that of Translation initiation factor IF-2 from Prochlorococcus marinus (strain MIT 9515).